The sequence spans 89 residues: Progonadoliberin-1 (89 aa).

A signal peptide spans 1–23 (MKAFPTFALLFLVLLFSAHVSDA). Pyrrolidone carboxylic acid is present on Gln-24. Residue Gly-33 is modified to Glycine amide.

It belongs to the GnRH family. Expressed in the forebrain from larval stages.

It localises to the secreted. In terms of biological role, stimulates the secretion of gonadotropins. This is Progonadoliberin-1 (gnrh1) from Xenopus laevis (African clawed frog).